The following is a 331-amino-acid chain: Photosystem II assembly lipoprotein Ycf48 (331 aa).

A signal peptide spans Met1–Gly23. A lipid anchor (N-palmitoyl cysteine) is attached at Cys24. Cys24 carries S-diacylglycerol cysteine lipidation.

It belongs to the Ycf48 family. In terms of assembly, part of early PSII assembly complexes which includes D1 (psbA) and PsbI; not found in mature PSII. Binds to the lumenal side of PSII complexes. Interacts with YidC.

Its subcellular location is the cellular thylakoid membrane. A factor required for optimal assembly of photosystem II (PSII), acting in the early stages of PSII assembly. Also plays a role in replacement of photodamaged D1 (psbA). Assists YidC in synthesis of chlorophyll-binding proteins. The protein is Photosystem II assembly lipoprotein Ycf48 of Synechococcus sp. (strain RCC307).